Consider the following 265-residue polypeptide: Probable S-methyl-5'-thioinosine phosphorylase (265 aa).

Residues Ser-15 and 55-56 each bind phosphate; that span reads RH. Substrate is bound at residue Met-187. Residue Thr-188 participates in phosphate binding. 211 to 213 provides a ligand contact to substrate; the sequence is NYA.

Belongs to the PNP/MTAP phosphorylase family. MTAP subfamily. As to quaternary structure, homotrimer.

The catalysed reaction is S-methyl-5'-thioinosine + phosphate = 5-(methylsulfanyl)-alpha-D-ribose 1-phosphate + hypoxanthine. It functions in the pathway purine metabolism; purine nucleoside salvage. Functionally, catalyzes the reversible phosphorylation of S-methyl-5'-thioinosine (MTI) to hypoxanthine and 5-methylthioribose-1-phosphate. Involved in the breakdown of S-methyl-5'-thioadenosine (MTA), a major by-product of polyamine biosynthesis. Catabolism of (MTA) occurs via deamination to MTI and phosphorolysis to hypoxanthine. This Thermodesulfovibrio yellowstonii (strain ATCC 51303 / DSM 11347 / YP87) protein is Probable S-methyl-5'-thioinosine phosphorylase.